The sequence spans 688 residues: Transcription factor GTE9 (688 aa).

The interval 1-36 (MTERNGGFPGDYCFEAPGGDYDEGSDSPRVSEGSNC) is disordered. The Bromo domain occupies 132–238 (TAVMLLMKQC…KFFEVRWKTL (107 aa)). The NET domain maps to 280 to 361 (ENVVDPAKRV…EHLREIQNKK (82 aa)). Positions 423–505 (GNSLGSVSGD…AQNEKQLPPE (83 aa)) are disordered. Ser478 carries the post-translational modification Phosphoserine. The segment covering 491 to 500 (QDGNSAQNEK) has biased composition (polar residues). Residues 505–688 (EKSYRAAILK…EIDIEEGEID (184 aa)) form a transcription activation domain region. Residues 534–613 (TRDPEKLQRE…QSVELNENAK (80 aa)) adopt a coiled-coil conformation. The tract at residues 660-688 (FMKQDEDEEEADPLTSPAPEIDIEEGEID) is disordered.

Interacts with BT1.

The protein localises to the nucleus. The sequence is that of Transcription factor GTE9 (GTE9) from Arabidopsis thaliana (Mouse-ear cress).